Here is a 1028-residue protein sequence, read N- to C-terminus: Isoleucine--tRNA ligase (1028 aa).

The 'HIGH' region signature appears at 51 to 61; the sequence is PTANGRPHIGH. The 'KMSKS' region motif lies at 591–595; the sequence is KMSKS. Residue Lys-594 participates in ATP binding.

This sequence belongs to the class-I aminoacyl-tRNA synthetase family. IleS type 2 subfamily. Monomer. It depends on Zn(2+) as a cofactor.

The protein localises to the cytoplasm. The enzyme catalyses tRNA(Ile) + L-isoleucine + ATP = L-isoleucyl-tRNA(Ile) + AMP + diphosphate. Its function is as follows. Catalyzes the attachment of isoleucine to tRNA(Ile). As IleRS can inadvertently accommodate and process structurally similar amino acids such as valine, to avoid such errors it has two additional distinct tRNA(Ile)-dependent editing activities. One activity is designated as 'pretransfer' editing and involves the hydrolysis of activated Val-AMP. The other activity is designated 'posttransfer' editing and involves deacylation of mischarged Val-tRNA(Ile). This chain is Isoleucine--tRNA ligase, found in Thermoplasma volcanium (strain ATCC 51530 / DSM 4299 / JCM 9571 / NBRC 15438 / GSS1).